The primary structure comprises 255 residues: Aliphatic sulfonates import ATP-binding protein SsuB (255 aa).

One can recognise an ABC transporter domain in the interval 12–233 (LLLNAVSKHY…RLGSVRLAEL (222 aa)). Residue 44–51 (GRSGGGKS) participates in ATP binding.

It belongs to the ABC transporter superfamily. Aliphatic sulfonates importer (TC 3.A.1.17.2) family. In terms of assembly, the complex is composed of two ATP-binding proteins (SsuB), two transmembrane proteins (SsuC) and a solute-binding protein (SsuA).

It localises to the cell inner membrane. The enzyme catalyses ATP + H2O + aliphatic sulfonate-[sulfonate-binding protein]Side 1 = ADP + phosphate + aliphatic sulfonateSide 2 + [sulfonate-binding protein]Side 1.. Functionally, part of the ABC transporter complex SsuABC involved in aliphatic sulfonates import. Responsible for energy coupling to the transport system. The polypeptide is Aliphatic sulfonates import ATP-binding protein SsuB (Escherichia coli (strain K12)).